The following is a 418-amino-acid chain: Mitochondrial distribution and morphology protein 10 (418 aa).

Belongs to the MDM10 family. As to quaternary structure, component of the ER-mitochondria encounter structure (ERMES) or MDM complex, composed of MMM1, MDM10, MDM12 and MDM34. Associates with the mitochondrial outer membrane sorting assembly machinery SAM(core) complex.

The protein localises to the mitochondrion outer membrane. In terms of biological role, component of the ERMES/MDM complex, which serves as a molecular tether to connect the endoplasmic reticulum and mitochondria. Components of this complex are involved in the control of mitochondrial shape and protein biogenesis and may function in phospholipid exchange. MDM10 is involved in the late assembly steps of the general translocase of the mitochondrial outer membrane (TOM complex). Functions in the TOM40-specific route of the assembly of outer membrane beta-barrel proteins, including the association of TOM40 with the receptor TOM22 and small TOM proteins. Can associate with the SAM(core) complex as well as the MDM12-MMM1 complex, both involved in late steps of the major beta-barrel assembly pathway, that is responsible for biogenesis of all outer membrane beta-barrel proteins. May act as a switch that shuttles between both complexes and channels precursor proteins into the TOM40-specific pathway. Plays a role in mitochondrial morphology and in the inheritance of mitochondria. The sequence is that of Mitochondrial distribution and morphology protein 10 from Meyerozyma guilliermondii (strain ATCC 6260 / CBS 566 / DSM 6381 / JCM 1539 / NBRC 10279 / NRRL Y-324) (Yeast).